The following is a 568-amino-acid chain: Proline--tRNA ligase (568 aa).

This sequence belongs to the class-II aminoacyl-tRNA synthetase family. ProS type 1 subfamily. Homodimer.

It is found in the cytoplasm. It catalyses the reaction tRNA(Pro) + L-proline + ATP = L-prolyl-tRNA(Pro) + AMP + diphosphate. Catalyzes the attachment of proline to tRNA(Pro) in a two-step reaction: proline is first activated by ATP to form Pro-AMP and then transferred to the acceptor end of tRNA(Pro). As ProRS can inadvertently accommodate and process non-cognate amino acids such as alanine and cysteine, to avoid such errors it has two additional distinct editing activities against alanine. One activity is designated as 'pretransfer' editing and involves the tRNA(Pro)-independent hydrolysis of activated Ala-AMP. The other activity is designated 'posttransfer' editing and involves deacylation of mischarged Ala-tRNA(Pro). The misacylated Cys-tRNA(Pro) is not edited by ProRS. The protein is Proline--tRNA ligase of Lysinibacillus sphaericus (strain C3-41).